Consider the following 432-residue polypeptide: Adenylosuccinate synthetase (432 aa).

GTP contacts are provided by residues 13–19 and 41–43; these read GDEGKGK and GHT. Asp14 functions as the Proton acceptor in the catalytic mechanism. Asp14 and Gly41 together coordinate Mg(2+). Residues 14–17, 39–42, Thr130, Arg144, Gln225, Thr240, and Arg304 contribute to the IMP site; these read DEGK and NAGH. His42 functions as the Proton donor in the catalytic mechanism. 300 to 306 contributes to the substrate binding site; the sequence is ATTGRPR. GTP-binding positions include Arg306, 332–334, and 415–417; these read KLD and STG.

The protein belongs to the adenylosuccinate synthetase family. In terms of assembly, homodimer. Mg(2+) serves as cofactor.

Its subcellular location is the cytoplasm. It catalyses the reaction IMP + L-aspartate + GTP = N(6)-(1,2-dicarboxyethyl)-AMP + GDP + phosphate + 2 H(+). It functions in the pathway purine metabolism; AMP biosynthesis via de novo pathway; AMP from IMP: step 1/2. Functionally, plays an important role in the de novo pathway of purine nucleotide biosynthesis. Catalyzes the first committed step in the biosynthesis of AMP from IMP. This Hahella chejuensis (strain KCTC 2396) protein is Adenylosuccinate synthetase.